Here is a 398-residue protein sequence, read N- to C-terminus: Maltoporin (398 aa).

The first 30 residues, Met1 to Ala30, serve as a signal peptide directing secretion.

It belongs to the porin LamB (TC 1.B.3) family. Homotrimer formed of three 18-stranded antiparallel beta-barrels, containing three independent channels.

Its subcellular location is the cell outer membrane. The enzyme catalyses beta-maltose(in) = beta-maltose(out). Involved in the transport of maltose and maltodextrins. The chain is Maltoporin from Hahella chejuensis (strain KCTC 2396).